The sequence spans 155 residues: Transcriptional repressor NrdR (155 aa).

A zinc finger spans residues 3–34; sequence CPFCGNIDTQVKDSRPAEDHVSIRRRRFCPAC. The ATP-cone domain maps to 49 to 139; it reads LVVIKSSGKR…VYKNFQAADD (91 aa).

The protein belongs to the NrdR family. The cofactor is Zn(2+).

In terms of biological role, negatively regulates transcription of bacterial ribonucleotide reductase nrd genes and operons by binding to NrdR-boxes. The sequence is that of Transcriptional repressor NrdR from Cereibacter sphaeroides (strain ATCC 17029 / ATH 2.4.9) (Rhodobacter sphaeroides).